The following is a 794-amino-acid chain: Phosphoribosylformylglycinamidine synthase subunit PurL (794 aa).

His-47 is a catalytic residue. ATP-binding residues include Tyr-50 and Lys-89. Glu-91 provides a ligand contact to Mg(2+). Residues 92–95 (SHNH) and Arg-114 contribute to the substrate site. The active-site Proton acceptor is the His-93. Asp-115 is a Mg(2+) binding site. Substrate is bound at residue Gln-238. Position 266 (Asp-266) interacts with Mg(2+). 310 to 312 (ESQ) contributes to the substrate binding site. ATP is bound by residues Asp-522 and Gly-559. Asn-560 lines the Mg(2+) pocket. Residue Ser-562 coordinates substrate.

It belongs to the FGAMS family. Monomer. Part of the FGAM synthase complex composed of 1 PurL, 1 PurQ and 2 PurS subunits.

The protein localises to the cytoplasm. It carries out the reaction N(2)-formyl-N(1)-(5-phospho-beta-D-ribosyl)glycinamide + L-glutamine + ATP + H2O = 2-formamido-N(1)-(5-O-phospho-beta-D-ribosyl)acetamidine + L-glutamate + ADP + phosphate + H(+). It participates in purine metabolism; IMP biosynthesis via de novo pathway; 5-amino-1-(5-phospho-D-ribosyl)imidazole from N(2)-formyl-N(1)-(5-phospho-D-ribosyl)glycinamide: step 1/2. Its function is as follows. Part of the phosphoribosylformylglycinamidine synthase complex involved in the purines biosynthetic pathway. Catalyzes the ATP-dependent conversion of formylglycinamide ribonucleotide (FGAR) and glutamine to yield formylglycinamidine ribonucleotide (FGAM) and glutamate. The FGAM synthase complex is composed of three subunits. PurQ produces an ammonia molecule by converting glutamine to glutamate. PurL transfers the ammonia molecule to FGAR to form FGAM in an ATP-dependent manner. PurS interacts with PurQ and PurL and is thought to assist in the transfer of the ammonia molecule from PurQ to PurL. This Prochlorococcus marinus (strain MIT 9303) protein is Phosphoribosylformylglycinamidine synthase subunit PurL.